A 414-amino-acid polypeptide reads, in one-letter code: MEELIQKARSVKKASIKLQSVSTVQKNEALLQIGAALKRKEDAILKANKMDVKEARDKGIRDSLIDRLALNQKRIDDMIQSCHRVAGLKDPVGEVIASWVQSDGLRISKVRVPIGAIGIIYESRPNVTVEASILALKTGNSILLRGGSDAFHSNMAIVKAIKEGLSRSSLPVESIEIVESTDRKLVEQMLKLREYLSLIVPRGSNRLIQYVVENSSIPVLETGVGNCHIFVDDSADLEKALEIVDNAKTQRPGTCNAVETLLVHQSIAAAFLPMMADRLSKKGVEIRGCSQTQKFIKVKPATDSDWETEFLDLILAVRVVNSLDEAIAHIQKYSSGHSEAILTENYFNAKKFVENIDAAAVYVNASTRFTDGGQFGFGGEIGISTQRLHARGPVGLEGLTTYKYVILGDYNVRR.

It belongs to the gamma-glutamyl phosphate reductase family.

The protein resides in the cytoplasm. It carries out the reaction L-glutamate 5-semialdehyde + phosphate + NADP(+) = L-glutamyl 5-phosphate + NADPH + H(+). The protein operates within amino-acid biosynthesis; L-proline biosynthesis; L-glutamate 5-semialdehyde from L-glutamate: step 2/2. Functionally, catalyzes the NADPH-dependent reduction of L-glutamate 5-phosphate into L-glutamate 5-semialdehyde and phosphate. The product spontaneously undergoes cyclization to form 1-pyrroline-5-carboxylate. The sequence is that of Gamma-glutamyl phosphate reductase from Kosmotoga olearia (strain ATCC BAA-1733 / DSM 21960 / TBF 19.5.1).